A 553-amino-acid polypeptide reads, in one-letter code: MASISPTSSSVAALRGHPVQFVKGGAVSKEAKGSISFSPVANSNNANVKFTGLRVAASLKRDGAFPGDGYSGNDNTVLPKSTSVRGQDYPTADSVLPTESIIVPEISNAGLKCVADMFSDEDKDTEQDLDSPTEGFSSISEAIKDIQQGKLVIVVDDESRENEGDLIMAASLVTPEAMAFVVRYGTGIVCVSMKEEDLERLNLPLMVATKENEEKLCTAFTVTVDAKEGTTTGVSAKDRAKTVMTLASPDSKPEDFNRPGHIFPLKYREGGVLKRAGHTEASVDLAMLAGLPPAAVLCEIVDEDGSMARLPKLRVFAERENLKIVSIADLIRYRRKRDRLVERSSVARLPLRWGNVRAYCYRSVIDGIEHIAMVKGEIGDGQGVLVRVHSECLTGDIFGSARCDCGDQLAMAMEMIEKAGRGVLVYLRGHEGRGIGLGHKLRAYNLQDDGRDTVEANEDLGLPVDSREYGIGAQILRDLGVRSMKLMTNNPAKYGGLKGYGLSIVGRVPLVTPITSENRRYLETKRTKMGHVYGLANGQASHQTGSNGAKGEH.

The transit peptide at Met1–Ala56 directs the protein to the chloroplast. Residues Asp62–Lys336 form a DHBP synthase region. The interval Tyr70 to Pro90 is disordered. The span at Gly72–Arg85 shows a compositional bias: polar residues. D-ribulose 5-phosphate is bound by residues Arg160–Glu161, Asp165, Arg275–Thr279, and Glu299. Glu161 provides a ligand contact to Mg(2+). His278 serves as a coordination point for Mg(2+). Residues Arg337–His553 form a GTP cyclohydrolase II region. Arg387–Glu391 provides a ligand contact to GTP. Cys392, Cys403, and Cys405 together coordinate Zn(2+). Residues Gln408, Glu431–Arg433, and Thr453 each bind GTP. Asp465 acts as the Proton acceptor; for GTP cyclohydrolase activity in catalysis. Arg467 (nucleophile; for GTP cyclohydrolase activity) is an active-site residue. Positions 488 and 493 each coordinate GTP.

In the N-terminal section; belongs to the DHBP synthase family. This sequence in the C-terminal section; belongs to the GTP cyclohydrolase II family. Mg(2+) is required as a cofactor. It depends on Mn(2+) as a cofactor. Requires Zn(2+) as cofactor.

The protein localises to the plastid. The protein resides in the chloroplast. The catalysed reaction is D-ribulose 5-phosphate = (2S)-2-hydroxy-3-oxobutyl phosphate + formate + H(+). It catalyses the reaction GTP + 4 H2O = 2,5-diamino-6-hydroxy-4-(5-phosphoribosylamino)-pyrimidine + formate + 2 phosphate + 3 H(+). It functions in the pathway cofactor biosynthesis; riboflavin biosynthesis; 2-hydroxy-3-oxobutyl phosphate from D-ribulose 5-phosphate: step 1/1. It participates in cofactor biosynthesis; riboflavin biosynthesis; 5-amino-6-(D-ribitylamino)uracil from GTP: step 1/4. Involved in riboflavin biosynthesis. Catalyzes both the conversion of D-ribulose 5-phosphate to formate and 3,4-dihydroxy-2-butanone 4-phosphate and the conversion of GTP to 2,5-diamino-6-ribosylamino-4(3H)-pyrimidinone 5'-phosphate (DARP), formate and pyrophosphate. This Oryza sativa subsp. japonica (Rice) protein is Probable bifunctional riboflavin biosynthesis protein RIBA 2, chloroplastic (RIBA2).